The following is a 231-amino-acid chain: 7-cyano-7-deazaguanine synthase (231 aa).

8-18 is an ATP binding site; it reads FSGGQDSTTCL. The Zn(2+) site is built by cysteine 188, cysteine 197, cysteine 200, and cysteine 203.

Belongs to the QueC family. The cofactor is Zn(2+).

It carries out the reaction 7-carboxy-7-deazaguanine + NH4(+) + ATP = 7-cyano-7-deazaguanine + ADP + phosphate + H2O + H(+). It participates in purine metabolism; 7-cyano-7-deazaguanine biosynthesis. Catalyzes the ATP-dependent conversion of 7-carboxy-7-deazaguanine (CDG) to 7-cyano-7-deazaguanine (preQ(0)). The protein is 7-cyano-7-deazaguanine synthase of Shigella flexneri serotype 5b (strain 8401).